A 93-amino-acid polypeptide reads, in one-letter code: Putative pterin-4-alpha-carbinolamine dehydratase (93 aa).

Belongs to the pterin-4-alpha-carbinolamine dehydratase family.

The enzyme catalyses (4aS,6R)-4a-hydroxy-L-erythro-5,6,7,8-tetrahydrobiopterin = (6R)-L-erythro-6,7-dihydrobiopterin + H2O. The protein is Putative pterin-4-alpha-carbinolamine dehydratase of Chloroflexus aurantiacus (strain ATCC 29366 / DSM 635 / J-10-fl).